A 285-amino-acid polypeptide reads, in one-letter code: MLLATFKLCAGSSYRHVRSMKGLQQQAVLAIGQELNRRALGGPAPAAWINQVRRRGSLLGSQLEDPLYSDQELAYIQQGEEAMQRALGILKDQEGWKKESRQANGDEVLSKVIPDVGKVFRLEVVVDQPMERLYEELVERMEAMGEWNPNVKEIKVLQKIGKDTVITHELAAEVAGNLVGPRDFVSVRCTKRRGSMCVLAGMATLYEEMPQQKGVIRAEHGPTCMVLRPLAGSPSRTKLTWLLSIDLKGWLPKTIINQVLSQTQVDFANHLRKRLESCPALEARC.

A mitochondrion-targeting transit peptide spans 1–63 (MLLATFKLCA…RRGSLLGSQL (63 aa)). A phosphoserine; by PKA mark is found at S57 and S195. Residues 67 to 280 (LYSDQELAYI…LRKRLESCPA (214 aa)) enclose the START domain.

In terms of assembly, may interact with TSPO. Corpus luteum and adrenal gland.

Its subcellular location is the mitochondrion. It catalyses the reaction cholesterol(in) = cholesterol(out). It functions in the pathway steroid metabolism; cholesterol metabolism. Plays a key role in steroid hormone synthesis by enhancing the metabolism of cholesterol into pregnenolone. Mediates the transfer of cholesterol from the outer mitochondrial membrane to the inner mitochondrial membrane where it is cleaved to pregnenolone. The polypeptide is Steroidogenic acute regulatory protein, mitochondrial (STAR) (Bos taurus (Bovine)).